The sequence spans 404 residues: Tryptophan synthase beta chain (404 aa).

Lys95 is modified (N6-(pyridoxal phosphate)lysine).

It belongs to the TrpB family. In terms of assembly, tetramer of two alpha and two beta chains. It depends on pyridoxal 5'-phosphate as a cofactor.

The catalysed reaction is (1S,2R)-1-C-(indol-3-yl)glycerol 3-phosphate + L-serine = D-glyceraldehyde 3-phosphate + L-tryptophan + H2O. It participates in amino-acid biosynthesis; L-tryptophan biosynthesis; L-tryptophan from chorismate: step 5/5. The beta subunit is responsible for the synthesis of L-tryptophan from indole and L-serine. This Thermus thermophilus (strain ATCC BAA-163 / DSM 7039 / HB27) protein is Tryptophan synthase beta chain (trpB).